The primary structure comprises 257 residues: Probable oxidoreductase yanE (257 aa).

It belongs to the oxidoreductase OpS7 family.

Its pathway is secondary metabolite biosynthesis; terpenoid biosynthesis. In terms of biological role, part of the gene cluster that mediates the biosynthesis of yanuthone D, a fungal isoprenoid epoxycyclohexenone that acts as an antibiotic against fungi and bacteria. The first step of the pathway is the synthesis of 6-methylsalicylic acid (6-MSA) by the polyketide synthase yanA. 6-MSA is then converted to m-cresol by the decarboxylase yanB. The cytochrome P450 monooxygenase yanC then catalyzes the oxidation of m-cresol to toluquinol. Epoxidation of toluquinol is then performed by the short chain dehydrogenase yanD, with the help of yanE, and a further prenylation by yanG leads to 7-deacetoxyyanuthone A. The next step is the hydroxylation of C-22 of 7-deacetoxyyanuthone A by the cytochrome P450 monooxygenase yanH to yield 22-deacetylyanuthone A. O-Mevalon transferase yanI then attaches mevalon to the hydroxyl group of 22-deacetylyanuthone A to produce yanuthone E. Finally, the FAD-dependent monooxygenase yanF oxidizes the hydroxyl group at C15 of yanuthone E to form yanuthone D. Furthermore, several branching points in the pathway lead to the production of yanuthones F and G from 7-deacetoxyyanuthone A; yanuthones H and I from 22-deacetylyanuthone A; and yanuthone J from yanuthone E. YanE is also involved in the synthesis of yanuthone X1 which does not have 6-methylsalicylic acid (6-MSA) as precursor. In Aspergillus niger (strain ATCC 1015 / CBS 113.46 / FGSC A1144 / LSHB Ac4 / NCTC 3858a / NRRL 328 / USDA 3528.7), this protein is Probable oxidoreductase yanE.